The sequence spans 156 residues: Fibroblast growth factor 2 (156 aa).

A propeptide spanning residues 1 to 9 is cleaved from the precursor; it reads MAAGSITTL. A heparin-binding site is contributed by Asn-37. Tyr-83 is modified (phosphotyrosine; by TEC). Residue Lys-96 forms a Glycyl lysine isopeptide (Lys-Gly) (interchain with G-Cter in SUMO1) linkage. Positions 129–145 are heparin-binding; that stretch reads KRTGQYKLGSKTGPGQK.

This sequence belongs to the heparin-binding growth factors family. As to quaternary structure, monomer. Homodimer. Interacts with FGFR1, FGFR2, FGFR3 and FGFR4. Affinity between fibroblast growth factors (FGFs) and their receptors is increased by heparan sulfate glycosaminoglycans that function as coreceptors. Interacts with CSPG4, FGFBP1 and TEC. Found in a complex with FGFBP1, FGF1 and FGF2. Interacts with FGFBP3. Interacts with integrin ITGAV:ITGB3; the interaction is required for FGF2 signaling. Interacts with SNORC (via the extracellular domain). Interacts with glypican GPC3. In terms of processing, phosphorylation at Tyr-83 regulates FGF2 unconventional secretion.

It localises to the secreted. The protein localises to the nucleus. Functionally, acts as a ligand for FGFR1, FGFR2, FGFR3 and FGFR4. Also acts as an integrin ligand which is required for FGF2 signaling. Binds to integrin ITGAV:ITGB3. Plays an important role in the regulation of cell survival, cell division, cell differentiation and cell migration. Functions as a potent mitogen in vitro. Can induce angiogenesis. Mediates phosphorylation of ERK1/2 and thereby promotes retinal lens fiber differentiation. This chain is Fibroblast growth factor 2 (FGF2), found in Monodelphis domestica (Gray short-tailed opossum).